Here is a 539-residue protein sequence, read N- to C-terminus: Interleukin-2 receptor subunit beta (539 aa).

The N-terminal stretch at 1–26 (MATIALPWSLSLYVFLLLLATPWASA) is a signal peptide. At 27 to 240 (AVKNCSHLEC…RTRPADPMKE (214 aa)) the chain is on the extracellular side. 4 N-linked (GlcNAc...) asparagine glycosylation sites follow: N30, N43, N55, and N71. A disulfide bridge links C36 with C46. C74 and C86 form a disulfide bridge. The Fibronectin type-III domain maps to 135-235 (APHSLQVLHI…QPLTFRTRPA (101 aa)). N150 and N216 each carry an N-linked (GlcNAc...) asparagine glycan. The WSXWS motif signature appears at 221–225 (WSPWS). Residues 241–268 (ILPMSWLRYLLLVLGCFSGFFSCVYILV) form a helical membrane-spanning segment. Over 269-539 (KCRYLGPWLK…LQAQDSVHLI (271 aa)) the chain is Cytoplasmic. Positions 281-289 (LKCHIPDPS) match the Box 1 motif motif. 3 disordered regions span residues 395-419 (VEEDGSRLPEGSPHPPLLPLAGEQD), 440-465 (PNTAYGGSRAPEERSPLSLHEGLPSL), and 477-516 (LERMPEGDGEGLSANSSGEQASVPEGNLHGQDQDRGQGPI).

It belongs to the type I cytokine receptor family. Type 4 subfamily. As to quaternary structure, non-covalent dimer of an alpha and a beta subunit. IL2R exists in 3 different forms: a high affinity dimer, an intermediate affinity monomer (beta subunit), and a low affinity monomer (alpha subunit). The high and intermediate affinity forms also associate with a gamma subunit. Interacts with SHB upon interleukin stimulation.

The protein resides in the cell membrane. The protein localises to the cell surface. Receptor for interleukin-2. This beta subunit is involved in receptor mediated endocytosis and transduces the mitogenic signals of IL2. Probably in association with IL15RA, involved in the stimulation of neutrophil phagocytosis by IL15. This chain is Interleukin-2 receptor subunit beta (Il2rb), found in Mus musculus (Mouse).